Reading from the N-terminus, the 446-residue chain is MISAFEANCDGLVGPTHSYVGLSPGNLASTRNAGEVSNPRGAALEGLAKMRRLADLGLPQFVLPPHERPAVSLLRQLGFSGPDEIVLTSAWRDAPALAAAACSASPMWAANAATVTPSADAADGRVHFTPANLLTNLHRSLEGRQTARSLRRLFADETRFAVHDPLPAQPHFADEGAANHVRLCAEHGGPGVNLFVWGREAWSHWDGRFPARQTKEAFEAIQRRHGAARAVFPQQGKAAIEGGAFHNDVVCVGTRECLFFHERAFEDRATMAREVRAAASGLFEPAFVEVTEADLPMADLVASYLFNSQLLVVPGEDRLVLLAPVETRDNPRAYAVAESLATSNGPIGRVEYVDVRQSMRNGGGPACLRLRVVLTEAELAAANPAQRFTADLQDALADWITRRYRDRLSPADLADAKLLTESREALDELTQILGLGDDFYPFQRTA.

Substrate is bound by residues 20 to 29 (VGLSPGNLAS), Asn111, and 138 to 139 (HR). Residue Glu175 is part of the active site. A substrate-binding site is contributed by Arg212. The active site involves His246. Substrate-binding residues include Asp248 and Asn361. Cys367 functions as the Nucleophile in the catalytic mechanism.

The protein belongs to the succinylarginine dihydrolase family. Homodimer.

The catalysed reaction is N(2)-succinyl-L-arginine + 2 H2O + 2 H(+) = N(2)-succinyl-L-ornithine + 2 NH4(+) + CO2. It participates in amino-acid degradation; L-arginine degradation via AST pathway; L-glutamate and succinate from L-arginine: step 2/5. Catalyzes the hydrolysis of N(2)-succinylarginine into N(2)-succinylornithine, ammonia and CO(2). This Caulobacter vibrioides (strain ATCC 19089 / CIP 103742 / CB 15) (Caulobacter crescentus) protein is N-succinylarginine dihydrolase 2.